The sequence spans 262 residues: Putative 1-acyl-sn-glycerol-3-phosphate acyltransferase acl-1 (262 aa).

3 helical membrane-spanning segments follow: residues 3–23, 29–49, and 89–109; these read FLAI…PVIG, VYFG…SIPF, and IIIA…AWPV. The HXXXXD motif motif lies at 94 to 99; the sequence is HQSALD.

Belongs to the 1-acyl-sn-glycerol-3-phosphate acyltransferase family.

The protein localises to the membrane. It carries out the reaction a 1-acyl-sn-glycero-3-phosphate + an acyl-CoA = a 1,2-diacyl-sn-glycero-3-phosphate + CoA. Its pathway is phospholipid metabolism; CDP-diacylglycerol biosynthesis; CDP-diacylglycerol from sn-glycerol 3-phosphate: step 2/3. Functionally, converts lysophosphatidic acid (LPA) into phosphatidic acid by incorporating an acyl moiety at the sn-2 position of the glycerol backbone. The sequence is that of Putative 1-acyl-sn-glycerol-3-phosphate acyltransferase acl-1 (acl-1) from Caenorhabditis elegans.